The following is a 364-amino-acid chain: Spermidine/putrescine import ATP-binding protein PotA (364 aa).

The ABC transporter domain occupies 5–235 (LSFKDVSKGF…PVNRFVADFI (231 aa)). ATP is bound at residue 37 to 44 (GPSGCGKT).

The protein belongs to the ABC transporter superfamily. Spermidine/putrescine importer (TC 3.A.1.11.1) family. In terms of assembly, the complex is composed of two ATP-binding proteins (PotA), two transmembrane proteins (PotB and PotC) and a solute-binding protein (PotD).

The protein localises to the cell membrane. The enzyme catalyses ATP + H2O + polyamine-[polyamine-binding protein]Side 1 = ADP + phosphate + polyamineSide 2 + [polyamine-binding protein]Side 1.. In terms of biological role, part of the ABC transporter complex PotABCD involved in spermidine/putrescine import. Responsible for energy coupling to the transport system. The sequence is that of Spermidine/putrescine import ATP-binding protein PotA from Staphylococcus epidermidis (strain ATCC 12228 / FDA PCI 1200).